The primary structure comprises 227 residues: UPF0758 protein lpp2553 (227 aa).

Positions 102-225 constitute an MPN domain; it reads RLSNTQQTYA…YSIFAENKWV (124 aa). The Zn(2+) site is built by histidine 173, histidine 175, and aspartate 186. A JAMM motif motif is present at residues 173 to 186; that stretch reads HNHPSGLSDASQQD.

Belongs to the UPF0758 family.

In Legionella pneumophila (strain Paris), this protein is UPF0758 protein lpp2553.